A 346-amino-acid chain; its full sequence is Alkylated DNA repair protein ALKBH8 homolog (346 aa).

A disordered region spans residues 1 to 21; that stretch reads MVQPRFVRPTQSSPSSISGEP. A compositionally biased stretch (low complexity) spans 12-21; sequence SSPSSISGEP. An RRM domain is found at 24–102; the sequence is SNLYVANCGP…RSLHIRYSVL (79 aa). The Fe2OG dioxygenase domain maps to 208–328; the sequence is NLDQLTVNEY…RVSFTLRKVR (121 aa). The Fe cation site is built by His226, Asp228, and His298. Residues Arg319 and Arg325 each coordinate 2-oxoglutarate.

The protein belongs to the alkB family. Fe(2+) serves as cofactor.

Binds tRNA and catalyzes the iron and alpha-ketoglutarate dependent hydroxylation of 5-methylcarboxymethyl uridine at the wobble position of the anticodon loop in tRNA via its dioxygenase domain, giving rise to 5-(S)-methoxycarbonylhydroxymethyluridine. In Arabidopsis thaliana (Mouse-ear cress), this protein is Alkylated DNA repair protein ALKBH8 homolog.